The following is an 87-amino-acid chain: Down syndrome critical region protein 10 (87 aa).

This is Down syndrome critical region protein 10 (DSCR10) from Pan troglodytes (Chimpanzee).